The chain runs to 416 residues: tRNA(Met) cytidine acetate ligase (416 aa).

ATP is bound by residues 7–20, Gly102, Asn166, and Arg191; that span reads VAEY…HLYL.

Belongs to the TmcAL family.

It is found in the cytoplasm. It carries out the reaction cytidine(34) in elongator tRNA(Met) + acetate + ATP = N(4)-acetylcytidine(34) in elongator tRNA(Met) + AMP + diphosphate. In terms of biological role, catalyzes the formation of N(4)-acetylcytidine (ac(4)C) at the wobble position of elongator tRNA(Met), using acetate and ATP as substrates. First activates an acetate ion to form acetyladenylate (Ac-AMP) and then transfers the acetyl group to tRNA to form ac(4)C34. The chain is tRNA(Met) cytidine acetate ligase from Syntrophomonas wolfei subsp. wolfei (strain DSM 2245B / Goettingen).